Reading from the N-terminus, the 245-residue chain is 1-(5-phosphoribosyl)-5-[(5-phosphoribosylamino)methylideneamino] imidazole-4-carboxamide isomerase (245 aa).

Aspartate 7 acts as the Proton acceptor in catalysis. The Proton donor role is filled by aspartate 129.

The protein belongs to the HisA/HisF family.

Its subcellular location is the cytoplasm. The enzyme catalyses 1-(5-phospho-beta-D-ribosyl)-5-[(5-phospho-beta-D-ribosylamino)methylideneamino]imidazole-4-carboxamide = 5-[(5-phospho-1-deoxy-D-ribulos-1-ylimino)methylamino]-1-(5-phospho-beta-D-ribosyl)imidazole-4-carboxamide. It functions in the pathway amino-acid biosynthesis; L-histidine biosynthesis; L-histidine from 5-phospho-alpha-D-ribose 1-diphosphate: step 4/9. This Shigella boydii serotype 18 (strain CDC 3083-94 / BS512) protein is 1-(5-phosphoribosyl)-5-[(5-phosphoribosylamino)methylideneamino] imidazole-4-carboxamide isomerase.